Here is a 156-residue protein sequence, read N- to C-terminus: 3-hydroxyacyl-[acyl-carrier-protein] dehydratase FabZ (156 aa).

Histidine 50 is a catalytic residue.

This sequence belongs to the thioester dehydratase family. FabZ subfamily.

It localises to the cytoplasm. It catalyses the reaction a (3R)-hydroxyacyl-[ACP] = a (2E)-enoyl-[ACP] + H2O. Functionally, involved in unsaturated fatty acids biosynthesis. Catalyzes the dehydration of short chain beta-hydroxyacyl-ACPs and long chain saturated and unsaturated beta-hydroxyacyl-ACPs. This chain is 3-hydroxyacyl-[acyl-carrier-protein] dehydratase FabZ, found in Janthinobacterium sp. (strain Marseille) (Minibacterium massiliensis).